The following is a 163-amino-acid chain: Nucleotide-binding protein Mvan_0997 (163 aa).

It belongs to the YajQ family.

Nucleotide-binding protein. The protein is Nucleotide-binding protein Mvan_0997 of Mycolicibacterium vanbaalenii (strain DSM 7251 / JCM 13017 / BCRC 16820 / KCTC 9966 / NRRL B-24157 / PYR-1) (Mycobacterium vanbaalenii).